A 41-amino-acid polypeptide reads, in one-letter code: Cytochrome b559 subunit beta (41 aa).

Residues 16 to 32 form a helical membrane-spanning segment; it reads WLAVHALAVPTVFFLGA. His-20 is a heme binding site.

Belongs to the PsbE/PsbF family. In terms of assembly, heterodimer of an alpha subunit and a beta subunit. PSII is composed of 1 copy each of membrane proteins PsbA, PsbB, PsbC, PsbD, PsbE, PsbF, PsbH, PsbI, PsbJ, PsbK, PsbL, PsbM, PsbT, PsbX, PsbY, PsbZ, Psb30/Ycf12, at least 3 peripheral proteins of the oxygen-evolving complex and a large number of cofactors. It forms dimeric complexes. Heme b is required as a cofactor.

It localises to the plastid. It is found in the chloroplast thylakoid membrane. This b-type cytochrome is tightly associated with the reaction center of photosystem II (PSII). PSII is a light-driven water:plastoquinone oxidoreductase that uses light energy to abstract electrons from H(2)O, generating O(2) and a proton gradient subsequently used for ATP formation. It consists of a core antenna complex that captures photons, and an electron transfer chain that converts photonic excitation into a charge separation. This chain is Cytochrome b559 subunit beta, found in Chlorella vulgaris (Green alga).